The following is a 418-amino-acid chain: Adenylosuccinate synthetase (418 aa).

GTP-binding positions include 12 to 18 (GDEGKGK) and 40 to 42 (GHT). The active-site Proton acceptor is aspartate 13. Aspartate 13 and glycine 40 together coordinate Mg(2+). IMP is bound by residues 13–16 (DEGK), 38–41 (NAGH), threonine 128, arginine 142, glutamine 221, threonine 236, and arginine 299. The Proton donor role is filled by histidine 41. Residue 295–301 (ATTGRNR) coordinates substrate. Residues arginine 301, 327–329 (KAD), and 399–401 (SYG) contribute to the GTP site.

Belongs to the adenylosuccinate synthetase family. In terms of assembly, homodimer. Mg(2+) serves as cofactor.

It localises to the cytoplasm. It catalyses the reaction IMP + L-aspartate + GTP = N(6)-(1,2-dicarboxyethyl)-AMP + GDP + phosphate + 2 H(+). It participates in purine metabolism; AMP biosynthesis via de novo pathway; AMP from IMP: step 1/2. Plays an important role in the de novo pathway of purine nucleotide biosynthesis. Catalyzes the first committed step in the biosynthesis of AMP from IMP. This is Adenylosuccinate synthetase from Finegoldia magna (strain ATCC 29328 / DSM 20472 / WAL 2508) (Peptostreptococcus magnus).